Here is a 210-residue protein sequence, read N- to C-terminus: Dephospho-CoA kinase (210 aa).

Positions 18–210 (RIGITGGIAS…LSYPQVEVLL (193 aa)) constitute a DPCK domain. 26–31 (ASGKTS) provides a ligand contact to ATP.

It belongs to the CoaE family.

The protein localises to the cytoplasm. It catalyses the reaction 3'-dephospho-CoA + ATP = ADP + CoA + H(+). Its pathway is cofactor biosynthesis; coenzyme A biosynthesis; CoA from (R)-pantothenate: step 5/5. In terms of biological role, catalyzes the phosphorylation of the 3'-hydroxyl group of dephosphocoenzyme A to form coenzyme A. The sequence is that of Dephospho-CoA kinase from Prochlorococcus marinus (strain SARG / CCMP1375 / SS120).